A 335-amino-acid polypeptide reads, in one-letter code: Protein BRASSINAZOLE-RESISTANT 2 (335 aa).

A compositionally biased stretch (low complexity) spans Met1–Ala19. Disordered stretches follow at residues Met1 to Arg40, Thr85 to Pro122, and Pro164 to Pro190. Residues Arg22–Arg103 form a required for DNA-binding region. Residues Gly99–Asp120 show a composition bias toward polar residues. Position 175 is a phosphothreonine (Thr175). Positions His231 to His251 are PEST-like.

Belongs to the BZR/LAT61 family. In terms of assembly, interacts with ASK7/BIN2 through its C-terminal domain and with the bHLH transcription factors BIM1, BIM2 and BIM3 through its C- and N-terminal domains. Interacts (via N-terminus) with REF6 and ELF6. Interacts with MYB30. Interacts with IWS1. Interacts with ASHH2/SDG8. Binds to MYB56 when dephosphorylated in the nucleus of quiescent center (QC) cells. Binds to WRKY46, WRKY54 and WRKY70 to cooperatively regulate the expression of target genes. In terms of processing, phosphorylated by ASK7/BIN2. Phosphorylation increases protein degradation and/or interferes with the nuclear localization. As to expression, ubiquitously expressed in cotyledons, leaves, hypocotyls and roots.

The protein resides in the nucleus. It is found in the cytoplasm. Its function is as follows. Positive regulator of brassinosteroid (BR) signaling. Transcription factor that activates target gene expression by binding specifically to the DNA sequence 5'-CANNTG-3'(E box) through its N-terminal domain. Can bind individually to the promoter as a homodimer or synergistically as a heterodimer with BIM1, BIM2 or BIM3. The C-terminal domain is probably involved in transcriptional activation. Recruits the transcription elongation factor IWS1 to control BR-regulated gene expression. Forms a trimeric complex with IWS1 and ASHH2/SDG8 to regulate BR-regulated gene expression. Promotes quiescent center (QC) self-renewal by cell divisions in the primary root. Binds to the E-boxes of the BRAVO promoter to repress its expression. This Arabidopsis thaliana (Mouse-ear cress) protein is Protein BRASSINAZOLE-RESISTANT 2.